The following is a 182-amino-acid chain: Glycerol-3-phosphate acyltransferase 1 (182 aa).

Transmembrane regions (helical) follow at residues 5-25, 54-74, 81-101, 117-137, and 157-177; these read MQFLYLVASYLIGNILTAYIV, GYFIATFLGDAIKGAIVVAVA, PTFVMLTLLAVIIGHIYPVLF, IAFDYLIALTLLGIFIVFYLI, and ILYSYSIVTTILSGIIIVLIL.

Belongs to the PlsY family. As to quaternary structure, probably interacts with PlsX.

The protein localises to the cell membrane. The catalysed reaction is an acyl phosphate + sn-glycerol 3-phosphate = a 1-acyl-sn-glycero-3-phosphate + phosphate. The protein operates within lipid metabolism; phospholipid metabolism. In terms of biological role, catalyzes the transfer of an acyl group from acyl-phosphate (acyl-PO(4)) to glycerol-3-phosphate (G3P) to form lysophosphatidic acid (LPA). This enzyme utilizes acyl-phosphate as fatty acyl donor, but not acyl-CoA or acyl-ACP. The chain is Glycerol-3-phosphate acyltransferase 1 from Bacillus cereus (strain ATCC 14579 / DSM 31 / CCUG 7414 / JCM 2152 / NBRC 15305 / NCIMB 9373 / NCTC 2599 / NRRL B-3711).